The primary structure comprises 534 residues: CTP synthase (534 aa).

The interval 1–267 (MTKYIFVTGG…DQIVCDHLKL (267 aa)) is amidoligase domain. Ser-13 lines the CTP pocket. Ser-13 serves as a coordination point for UTP. 14-19 (SIGKGI) contributes to the ATP binding site. Tyr-54 provides a ligand contact to L-glutamine. Residue Asp-71 coordinates ATP. Mg(2+) is bound by residues Asp-71 and Glu-141. CTP-binding positions include 148 to 150 (DIE), 188 to 193 (KTKPTQ), and Lys-224. Residues 188–193 (KTKPTQ) and Lys-224 contribute to the UTP site. Residue 240-242 (RDV) coordinates ATP. The region spanning 292 to 534 (KIALVGKYVE…FVTAAIKNSN (243 aa)) is the Glutamine amidotransferase type-1 domain. Gly-354 contributes to the L-glutamine binding site. The active-site Nucleophile; for glutamine hydrolysis is the Cys-381. L-glutamine-binding positions include 382 to 385 (LGMQ), Glu-405, and Arg-463. Catalysis depends on residues His-508 and Glu-510.

Belongs to the CTP synthase family. In terms of assembly, homotetramer.

The enzyme catalyses UTP + L-glutamine + ATP + H2O = CTP + L-glutamate + ADP + phosphate + 2 H(+). It catalyses the reaction L-glutamine + H2O = L-glutamate + NH4(+). It carries out the reaction UTP + NH4(+) + ATP = CTP + ADP + phosphate + 2 H(+). The protein operates within pyrimidine metabolism; CTP biosynthesis via de novo pathway; CTP from UDP: step 2/2. With respect to regulation, allosterically activated by GTP, when glutamine is the substrate; GTP has no effect on the reaction when ammonia is the substrate. The allosteric effector GTP functions by stabilizing the protein conformation that binds the tetrahedral intermediate(s) formed during glutamine hydrolysis. Inhibited by the product CTP, via allosteric rather than competitive inhibition. Catalyzes the ATP-dependent amination of UTP to CTP with either L-glutamine or ammonia as the source of nitrogen. Regulates intracellular CTP levels through interactions with the four ribonucleotide triphosphates. This chain is CTP synthase, found in Streptococcus pyogenes serotype M18 (strain MGAS8232).